The primary structure comprises 177 residues: Ribulose bisphosphate carboxylase small subunit, chloroplastic 6 (177 aa).

Residues 1-56 (MASSMMASTAAVARVGPAQTNMVAPFNGLRSSVAFPATRKANNDLSTLPSNGGRVS) constitute a chloroplast transit peptide.

It belongs to the RuBisCO small chain family. Heterohexadecamer of 8 large and 8 small subunits.

It is found in the plastid. It localises to the chloroplast. Its function is as follows. RuBisCO catalyzes two reactions: the carboxylation of D-ribulose 1,5-bisphosphate, the primary event in carbon dioxide fixation, as well as the oxidative fragmentation of the pentose substrate. Both reactions occur simultaneously and in competition at the same active site. Although the small subunit is not catalytic it is essential for maximal activity. The chain is Ribulose bisphosphate carboxylase small subunit, chloroplastic 6 from Lemna gibba (Swollen duckweed).